We begin with the raw amino-acid sequence, 798 residues long: Suppressor of spindle checkpoint defect 1 (798 aa).

Residues 339–359 are a coiled coil; sequence ESIQQSQVNVDDMCNRIANME.

Belongs to the APC5 family. The APC/C complex is probably composed of at least 12 subunits: apc-2, apc-10, apc-11, cdc-26, emb-1, emb-27, emb-30, mat-1, mat-2, mat-3, such-1 and gfi-3. As to expression, expressed in head neurons, vulval precursor cells and in mature sperm stored in the spermatheca.

It functions in the pathway protein modification; protein ubiquitination. In terms of biological role, probable component of the anaphase promoting complex/cyclosome (APC/C), a cell cycle-regulated E3 ubiquitin ligase that controls progression through mitosis and the G1 phase of the cell cycle. The APC/C complex acts by mediating ubiquitination and subsequent degradation of target proteins. Required for the metaphase to anaphase transition in meiosis. Plays a role in the segregation of DNA and centrioles during meiosis in male germ cells. The chain is Suppressor of spindle checkpoint defect 1 from Caenorhabditis elegans.